The chain runs to 213 residues: RPW8-like protein 3 (213 aa).

One can recognise an RPW8 domain in the interval 1 to 153 (MPVSEIMAGA…ITRQPTDCIC (153 aa)). Residues 7 to 23 (MAGAALGLALQVLHDAI) form a helical membrane-spanning segment. Coiled coils occupy residues 70–93 (EDLKHLLEKAVSLVEAYAELRRRN) and 125–147 (VDIKELMAKMSEMNTKLDEITRQ). N-linked (GlcNAc...) asparagine glycosylation occurs at Asn-157.

Belongs to the plant RPW8 protein family.

It is found in the membrane. Functionally, probable disease resistance (R) protein. The polypeptide is RPW8-like protein 3 (Arabidopsis thaliana (Mouse-ear cress)).